Here is a 416-residue protein sequence, read N- to C-terminus: S-layer protein B (416 aa).

Positions 1 to 20 are cleaved as a signal peptide; that stretch reads MKYNLLPLILLSLLVAPLLA. A coiled-coil region spans residues 310 to 330; it reads IASLNSTIQSLESQISSLSST. A helical membrane pass occupies residues 392 to 412; that stretch reads IALAVSIIAIIISIVVLILVF.

The protein belongs to the Sulfolobales SlaB family. In terms of assembly, the mushroom-shaped unit cells of the Sulfolobales' S-layers may consist of three SlaB subunits and six SlaA subunits.

It localises to the secreted. It is found in the cell wall. The protein localises to the S-layer. The protein resides in the cell membrane. S-layer small protein. May anchor the complex to the cell membrane. This chain is S-layer protein B, found in Metallosphaera sedula (strain ATCC 51363 / DSM 5348 / JCM 9185 / NBRC 15509 / TH2).